The following is a 362-amino-acid chain: UDP-N-acetylglucosamine--N-acetylmuramyl-(pentapeptide) pyrophosphoryl-undecaprenol N-acetylglucosamine transferase (362 aa).

Residues 15 to 17 (TGG), Asn127, Arg165, Ser191, Ile247, 266 to 271 (ALTVSE), and Gln292 contribute to the UDP-N-acetyl-alpha-D-glucosamine site.

Belongs to the glycosyltransferase 28 family. MurG subfamily.

It is found in the cell inner membrane. The catalysed reaction is di-trans,octa-cis-undecaprenyl diphospho-N-acetyl-alpha-D-muramoyl-L-alanyl-D-glutamyl-meso-2,6-diaminopimeloyl-D-alanyl-D-alanine + UDP-N-acetyl-alpha-D-glucosamine = di-trans,octa-cis-undecaprenyl diphospho-[N-acetyl-alpha-D-glucosaminyl-(1-&gt;4)]-N-acetyl-alpha-D-muramoyl-L-alanyl-D-glutamyl-meso-2,6-diaminopimeloyl-D-alanyl-D-alanine + UDP + H(+). Its pathway is cell wall biogenesis; peptidoglycan biosynthesis. Functionally, cell wall formation. Catalyzes the transfer of a GlcNAc subunit on undecaprenyl-pyrophosphoryl-MurNAc-pentapeptide (lipid intermediate I) to form undecaprenyl-pyrophosphoryl-MurNAc-(pentapeptide)GlcNAc (lipid intermediate II). This chain is UDP-N-acetylglucosamine--N-acetylmuramyl-(pentapeptide) pyrophosphoryl-undecaprenol N-acetylglucosamine transferase, found in Shewanella baltica (strain OS155 / ATCC BAA-1091).